Here is a 427-residue protein sequence, read N- to C-terminus: 4-hydroxy-3-methylbut-2-en-1-yl diphosphate synthase (flavodoxin) (427 aa).

Positions 1-21 (MNKLENTIDSDIAGPAPRHRT) are disordered. The [4Fe-4S] cluster site is built by Cys-310, Cys-313, Cys-356, and Glu-363.

This sequence belongs to the IspG family. The cofactor is [4Fe-4S] cluster.

It carries out the reaction (2E)-4-hydroxy-3-methylbut-2-enyl diphosphate + oxidized [flavodoxin] + H2O + 2 H(+) = 2-C-methyl-D-erythritol 2,4-cyclic diphosphate + reduced [flavodoxin]. The protein operates within isoprenoid biosynthesis; isopentenyl diphosphate biosynthesis via DXP pathway; isopentenyl diphosphate from 1-deoxy-D-xylulose 5-phosphate: step 5/6. Converts 2C-methyl-D-erythritol 2,4-cyclodiphosphate (ME-2,4cPP) into 1-hydroxy-2-methyl-2-(E)-butenyl 4-diphosphate. The polypeptide is 4-hydroxy-3-methylbut-2-en-1-yl diphosphate synthase (flavodoxin) (Bradyrhizobium diazoefficiens (strain JCM 10833 / BCRC 13528 / IAM 13628 / NBRC 14792 / USDA 110)).